We begin with the raw amino-acid sequence, 369 residues long: Transcription initiation factor IIA large subunit (369 aa).

Polar residues-rich tracts occupy residues 113–210 (HGNS…QNSP) and 218–233 (TESS…NDVP). A disordered region spans residues 113–248 (HGNSNYYSPP…IHDLDDAGSP (136 aa)). The residue at position 249 (S249) is a Phosphoserine. Residues 282-319 (IEDNEDEKKPPVDTPSDEAINSDLDDPDSDEAPETEEG) form a disordered region. Residues 304 to 319 (DLDDPDSDEAPETEEG) show a composition bias toward acidic residues.

Belongs to the TFIIA subunit 1 family. As to quaternary structure, TFIIA is a heterodimer of the large subunit and the small subunit gamma.

It is found in the nucleus. Functionally, TFIIA is a component of the transcription machinery of RNA polymerase II and plays an important role in transcriptional activation. TFIIA in a complex with tbp mediates transcriptional activity. This chain is Transcription initiation factor IIA large subunit, found in Schizosaccharomyces pombe (strain 972 / ATCC 24843) (Fission yeast).